A 565-amino-acid chain; its full sequence is Liver carboxylesterase 1 (565 aa).

A signal peptide spans 1-18 (MWLCALALASLAACTAWG). N-linked (GlcNAc...) asparagine glycosylation occurs at Asn-79. An intrachain disulfide couples Cys-87 to Cys-116. The active-site Acyl-ester intermediate is the Ser-221. A disulfide bond links Cys-273 and Cys-284. Glu-353 acts as the Charge relay system in catalysis. N-linked (GlcNAc...) asparagine glycosylation occurs at Asn-389. The Charge relay system role is filled by His-467. Leu-565 is a short sequence motif (prevents secretion from ER).

Belongs to the type-B carboxylesterase/lipase family. As to quaternary structure, monomer.

The protein resides in the endoplasmic reticulum lumen. The catalysed reaction is a carboxylic ester + H2O = an alcohol + a carboxylate + H(+). Functionally, involved in the detoxification of xenobiotics and in the activation of ester and amide prodrugs. The chain is Liver carboxylesterase 1 from Oryctolagus cuniculus (Rabbit).